Here is a 299-residue protein sequence, read N- to C-terminus: Elongation factor Ts (299 aa).

An involved in Mg(2+) ion dislocation from EF-Tu region spans residues 81 to 84 (TDFV).

Belongs to the EF-Ts family.

The protein resides in the cytoplasm. Its function is as follows. Associates with the EF-Tu.GDP complex and induces the exchange of GDP to GTP. It remains bound to the aminoacyl-tRNA.EF-Tu.GTP complex up to the GTP hydrolysis stage on the ribosome. The protein is Elongation factor Ts of Halothermothrix orenii (strain H 168 / OCM 544 / DSM 9562).